A 297-amino-acid chain; its full sequence is Large ribosomal subunit protein uL15m (297 aa).

Residues 1-21 constitute a mitochondrion transit peptide; the sequence is MSGNGVHGVHGALQLLRSLPK. The tract at residues 23-69 is disordered; the sequence is SLANLRPNPGSKKPERRRGRGRYRGRKCGRGHKGERQRGNRPRLGFE. A compositionally biased stretch (basic residues) spans 36–53; sequence PERRRGRGRYRGRKCGRG.

The protein belongs to the universal ribosomal protein uL15 family. As to quaternary structure, component of the mitochondrial ribosome large subunit (39S) which comprises a 16S rRNA and about 50 distinct proteins.

It is found in the mitochondrion. In Gallus gallus (Chicken), this protein is Large ribosomal subunit protein uL15m (MRPL15).